The sequence spans 157 residues: Protein-export protein SecB (157 aa).

This sequence belongs to the SecB family. In terms of assembly, homotetramer, a dimer of dimers. One homotetramer interacts with 1 SecA dimer.

It localises to the cytoplasm. Functionally, one of the proteins required for the normal export of preproteins out of the cell cytoplasm. It is a molecular chaperone that binds to a subset of precursor proteins, maintaining them in a translocation-competent state. It also specifically binds to its receptor SecA. The chain is Protein-export protein SecB from Rhodopseudomonas palustris (strain TIE-1).